A 367-amino-acid polypeptide reads, in one-letter code: Apolipoprotein A-V (367 aa).

A signal peptide spans 1-20 (MAAVITWALALLSVFATVQA). Ser-52 is subject to Phosphoserine. Positions 231–255 (TRKAKDLHTSIQRNLDQLRDELSTF) form a coiled coil. The interval 305 to 332 (EEIQHQLAPPPPSHSAFAPELGHSDSNK) is disordered.

The protein belongs to the apolipoprotein A1/A4/E family. As to quaternary structure, interacts with GPIHBP1. Interacts with SORL1; this interaction leads to APOA5 internalization and sorting either to lysosomes and degradation, or to the trans-Golgi network. Post-translationally, phosphorylated by FAM20C in the extracellular medium. Liver.

It is found in the secreted. Its subcellular location is the early endosome. The protein localises to the late endosome. The protein resides in the golgi apparatus. It localises to the trans-Golgi network. Functionally, minor apolipoprotein mainly associated with HDL and to a lesser extent with VLDL. May also be associated with chylomicrons. Important determinant of plasma triglyceride (TG) levels by both being a potent stimulator of apo-CII lipoprotein lipase (LPL) TG hydrolysis and an inhibitor of the hepatic VLDL-TG production rate (without affecting the VLDL-apoB production rate). Activates poorly lecithin:cholesterol acyltransferase (LCAT) and does not enhance efflux of cholesterol from macrophages. Binds heparin. The polypeptide is Apolipoprotein A-V (Apoa5) (Rattus norvegicus (Rat)).